The sequence spans 694 residues: Elongation factor G (694 aa).

A tr-type G domain is found at 11 to 285 (KDYRNIGIMA…AVIDYLPSPL (275 aa)). GTP is bound by residues 20–27 (AHIDAGKT), 84–88 (DTPGH), and 138–141 (NKMD).

This sequence belongs to the TRAFAC class translation factor GTPase superfamily. Classic translation factor GTPase family. EF-G/EF-2 subfamily.

It localises to the cytoplasm. Its function is as follows. Catalyzes the GTP-dependent ribosomal translocation step during translation elongation. During this step, the ribosome changes from the pre-translocational (PRE) to the post-translocational (POST) state as the newly formed A-site-bound peptidyl-tRNA and P-site-bound deacylated tRNA move to the P and E sites, respectively. Catalyzes the coordinated movement of the two tRNA molecules, the mRNA and conformational changes in the ribosome. The chain is Elongation factor G from Mycoplasma mobile (strain ATCC 43663 / 163K / NCTC 11711) (Mesomycoplasma mobile).